Here is a 233-residue protein sequence, read N- to C-terminus: uncharacterized protein (233 aa).

Helical transmembrane passes span 78–98, 113–133, and 188–208; these read FCLI…PVMY, FITC…LFKL, and FLLI…YGTI.

It localises to the membrane. This is an uncharacterized protein from Saccharomyces cerevisiae (strain ATCC 204508 / S288c) (Baker's yeast).